The chain runs to 179 residues: Replication restart protein DnaT (179 aa).

Residues 156–179 (GGLPKRDVNTVSEPDSQIPPGFRG) form a disordered region.

It belongs to the DnaT family. In terms of assembly, homooligomerizes. Interacts with PriB. Component of the replication restart primosome. Primosome assembly occurs via a 'hand-off' mechanism. PriA binds to replication forks, subsequently PriB then DnaT bind; DnaT then displaces ssDNA to generate the helicase loading substrate.

Its function is as follows. Involved in the restart of stalled replication forks, which reloads the replicative helicase on sites other than the origin of replication. Can function in multiple replication restart pathways. Displaces ssDNA from a PriB-ssDNA complex. Probably forms a spiral filament on ssDNA. The chain is Replication restart protein DnaT from Escherichia coli O81 (strain ED1a).